The following is a 289-amino-acid chain: Diaminopimelate epimerase (289 aa).

Asn-17, Gln-47, and Asn-67 together coordinate substrate. The Proton donor role is filled by Cys-76. Residues 77 to 78, Asn-164, Asn-198, and 216 to 217 each bind substrate; these read GN and ER. Cys-225 acts as the Proton acceptor in catalysis. A substrate-binding site is contributed by 226–227; that stretch reads GS.

The protein belongs to the diaminopimelate epimerase family. As to quaternary structure, homodimer.

It localises to the cytoplasm. It catalyses the reaction (2S,6S)-2,6-diaminopimelate = meso-2,6-diaminopimelate. The protein operates within amino-acid biosynthesis; L-lysine biosynthesis via DAP pathway; DL-2,6-diaminopimelate from LL-2,6-diaminopimelate: step 1/1. In terms of biological role, catalyzes the stereoinversion of LL-2,6-diaminopimelate (L,L-DAP) to meso-diaminopimelate (meso-DAP), a precursor of L-lysine and an essential component of the bacterial peptidoglycan. This is Diaminopimelate epimerase from Bradyrhizobium sp. (strain BTAi1 / ATCC BAA-1182).